The chain runs to 578 residues: NADPH oxidase 4 (578 aa).

The Cytoplasmic segment spans residues 1-16 (MAVSWRSWLANEGVKH). The chain crosses the membrane as a helical span at residues 17–37 (LCLFIWLSMNVLLFWKTFLLY). Residues 38 to 62 (NQGPEYHYLHQMLGLGLCLSRASAS) lie on the Extracellular side of the membrane. The 246-residue stretch at 58 to 303 (RASASVLNLN…YCAERLYRYI (246 aa)) folds into the Ferric oxidoreductase domain. Residues 63-83 (VLNLNCSLILLPMCRTLLAYL) form a helical membrane-spanning segment. Residues 84 to 103 (RGSQKVPSRRTRRLLDKSRT) are Cytoplasmic-facing. A helical transmembrane segment spans residues 104-124 (FHITCGVTICIFSGVHVAAHL). Residues 125–154 (VNALNFSVNYSEDFVELNAARYRDEDPRKL) lie on the Extracellular side of the membrane. N-linked (GlcNAc...) asparagine glycosylation occurs at Asn133. Residues 155-175 (LFTTVPGLTGVCMVVVLFLMI) form a helical membrane-spanning segment. Over 176-188 (TASTYAIRVSNYD) the chain is Cytoplasmic. A helical membrane pass occupies residues 189–209 (IFWYTHNLFFVFYMLLTLHVS). The Extracellular portion of the chain corresponds to 210–424 (GGLLKYQTNL…SPFEESLNYE (215 aa)). The interval 218–273 (NLDTHPPGCISLNRTSSQNISLPEYFSEHFHEPFPEGFSKPEEFTQNTFVKICMEE) is E-loop; essential for H2O2 generating catalytic activity. The N-linked (GlcNAc...) asparagine glycan is linked to Asn230. The tract at residues 248 to 575 (HEPFPEGFSK…YGTRFEYNKE (328 aa)) is mediates interaction with TLR4. Residues 304–419 (RSNKPVTIIS…DGPFGSPFEE (116 aa)) enclose the FAD-binding FR-type domain. Residues 425–445 (VSLCVAGGIGVTPFASILNTL) form a helical membrane-spanning segment. The Cytoplasmic portion of the chain corresponds to 446–578 (LDDWKPYKLR…RFEYNKESFS (133 aa)).

In terms of assembly, interacts with, relocalizes and stabilizes CYBA/p22phox. Interacts with TLR4. Interacts with protein disulfide isomerase. Interacts with PPP1R15A. Interacts with LRRC8A; this interaction prevents the ubiquitin-mediated degradation of LRRC8A. Heme is required as a cofactor. N-glycosylation is required for the function.

Its subcellular location is the cytoplasm. It localises to the endoplasmic reticulum membrane. The protein localises to the cell membrane. It is found in the cell junction. The protein resides in the focal adhesion. Its subcellular location is the nucleus. The catalysed reaction is NADPH + 2 O2 = 2 superoxide + NADP(+) + H(+). It catalyses the reaction NADPH + O2 + H(+) = H2O2 + NADP(+). Activated by insulin. Inhibited by diphenylene iodonium. Inhibited by plumbagin. Activated by phorbol 12-myristate 13-acetate (PMA). Its function is as follows. NADPH oxidase that catalyzes predominantly the reduction of oxygen to H2O2. Can also catalyze to a smaller extent, the reduction of oxygen to superoxide. May function as an oxygen sensor regulating the KCNK3/TASK-1 potassium channel and HIF1A activity. May regulate insulin signaling cascade. May play a role in apoptosis, bone resorption and lipolysaccharide-mediated activation of NFKB. May produce superoxide in the nucleus and play a role in regulating gene expression upon cell stimulation. Promotes ferroptosis, reactive oxygen species production and reduced glutathione (GSH) levels by activating NLRP3 inflammasome activation and cytokine release. This Pongo abelii (Sumatran orangutan) protein is NADPH oxidase 4 (NOX4).